Reading from the N-terminus, the 180-residue chain is Acireductone dioxygenase (180 aa).

4 residues coordinate Fe(2+): His97, His99, Glu103, and His141. Ni(2+) is bound by residues His97, His99, Glu103, and His141.

It belongs to the acireductone dioxygenase (ARD) family. In terms of assembly, monomer. Requires Fe(2+) as cofactor. Mg(2+) serves as cofactor. Ni(2+) is required as a cofactor. It depends on Mn(2+) as a cofactor. The cofactor is Co(2+).

The catalysed reaction is 1,2-dihydroxy-5-(methylsulfanyl)pent-1-en-3-one + O2 = 3-(methylsulfanyl)propanoate + CO + formate + 2 H(+). It catalyses the reaction 1,2-dihydroxy-5-(methylsulfanyl)pent-1-en-3-one + O2 = 4-methylsulfanyl-2-oxobutanoate + formate + 2 H(+). The protein operates within amino-acid biosynthesis; L-methionine biosynthesis via salvage pathway; L-methionine from S-methyl-5-thio-alpha-D-ribose 1-phosphate: step 5/6. In terms of biological role, catalyzes 2 different reactions between oxygen and the acireductone 1,2-dihydroxy-3-keto-5-methylthiopentene (DHK-MTPene) depending upon the metal bound in the active site. Fe-containing acireductone dioxygenase (Fe-ARD) produces formate and 2-keto-4-methylthiobutyrate (KMTB), the alpha-ketoacid precursor of methionine in the methionine recycle pathway. Ni-containing acireductone dioxygenase (Ni-ARD) produces methylthiopropionate, carbon monoxide and formate, and does not lie on the methionine recycle pathway. The protein is Acireductone dioxygenase (mtnD) of Klebsiella oxytoca.